The chain runs to 429 residues: UDP-N-acetylglucosamine 1-carboxyvinyltransferase (429 aa).

22 to 23 (KN) lines the phosphoenolpyruvate pocket. R102 contributes to the UDP-N-acetyl-alpha-D-glucosamine binding site. C126 (proton donor) is an active-site residue. C126 carries the 2-(S-cysteinyl)pyruvic acid O-phosphothioketal modification. UDP-N-acetyl-alpha-D-glucosamine-binding positions include 131 to 135 (RPVDL), D316, and I338.

The protein belongs to the EPSP synthase family. MurA subfamily.

The protein localises to the cytoplasm. It carries out the reaction phosphoenolpyruvate + UDP-N-acetyl-alpha-D-glucosamine = UDP-N-acetyl-3-O-(1-carboxyvinyl)-alpha-D-glucosamine + phosphate. The protein operates within cell wall biogenesis; peptidoglycan biosynthesis. In terms of biological role, cell wall formation. Adds enolpyruvyl to UDP-N-acetylglucosamine. The protein is UDP-N-acetylglucosamine 1-carboxyvinyltransferase of Methylobacterium sp. (strain 4-46).